The primary structure comprises 365 residues: Zinc finger TRAF-type-containing protein 1-B (365 aa).

A disordered region spans residues 1-56 (MSEEREAPGPLASSSAGLGAEVGQEEVPGGAGPARLLLLPSDSDGPPKKRLRSEAE). The RING-type; degenerate zinc-finger motif lies at 72-117 (CAVCLDLPKASVYQCTNGHLMCAGCFIHLLADARLKEEQATCPNCR). The segment at 113-186 (CPNCRCEISK…PWQGPYHELT (74 aa)) adopts a TRAF-type zinc-finger fold.

Belongs to the ZFTRAF1 family. Interacts with LGALS3.

It is found in the cytoplasm. The chain is Zinc finger TRAF-type-containing protein 1-B from Xenopus laevis (African clawed frog).